A 429-amino-acid polypeptide reads, in one-letter code: Glutamate-1-semialdehyde 2,1-aminomutase 1 (429 aa).

Lys267 carries the post-translational modification N6-(pyridoxal phosphate)lysine.

The protein belongs to the class-III pyridoxal-phosphate-dependent aminotransferase family. HemL subfamily. Homodimer. Pyridoxal 5'-phosphate is required as a cofactor.

It is found in the cytoplasm. It catalyses the reaction (S)-4-amino-5-oxopentanoate = 5-aminolevulinate. Its pathway is porphyrin-containing compound metabolism; protoporphyrin-IX biosynthesis; 5-aminolevulinate from L-glutamyl-tRNA(Glu): step 2/2. The polypeptide is Glutamate-1-semialdehyde 2,1-aminomutase 1 (Bacillus velezensis (strain DSM 23117 / BGSC 10A6 / LMG 26770 / FZB42) (Bacillus amyloliquefaciens subsp. plantarum)).